Reading from the N-terminus, the 366-residue chain is MAP kinase-activated protein kinase 2 (366 aa).

One can recognise a Protein kinase domain in the interval 30 to 291 (KVTSQVLGLG…ITEFMNHPWI (262 aa)). ATP contacts are provided by residues 36 to 44 (LGLGINGKV) and K59. A staurosporine-binding site is contributed by 105-107 (ECL). Residue D152 is the Proton acceptor of the active site. At T188 the chain carries Phosphothreonine; by MAPK14. At S238 the chain carries Phosphoserine; by MAPK14. The residue at position 294 (S294) is a Phosphoserine; by autocatalysis. The tract at residues 294–330 (STKVPQTPLHTSRVLKEDKERWEDVKEEMTSALATMR) is autoinhibitory helix. Residue T300 is modified to Phosphothreonine; by MAPK14. Residue K319 forms a Glycyl lysine isopeptide (Lys-Gly) (interchain with G-Cter in SUMO) linkage. A Nuclear export signal (NES) motif is present at residues 322-331 (MTSALATMRV). The p38 MAPK-binding site stretch occupies residues 332 to 356 (DYEQIKIKKIEDASNPLLLKRRKKA). 2 consecutive short sequence motifs (bipartite nuclear localization signal) follow at residues 337–340 (KIKK) and 351–355 (KRRKK).

This sequence belongs to the protein kinase superfamily. CAMK Ser/Thr protein kinase family. Heterodimer with p38-alpha/MAPK14; this heterodimer forms a stable complex: molecules are positioned 'face to face' so that the ATP-binding sites of both kinases are at the heterodimer interface. Interacts with PHC2. Interacts with HSF1. In terms of processing, sumoylation inhibits the protein kinase activity. Phosphorylated and activated by MAP kinase p38-alpha/MAPK14 at Thr-188, Ser-238 and Thr-300.

The protein localises to the cytoplasm. Its subcellular location is the nucleus. It catalyses the reaction L-seryl-[protein] + ATP = O-phospho-L-seryl-[protein] + ADP + H(+). It carries out the reaction L-threonyl-[protein] + ATP = O-phospho-L-threonyl-[protein] + ADP + H(+). With respect to regulation, activated following phosphorylation by p38-alpha/MAPK14 following various stresses. Inhibited following sumoylation. Specifically inhibited by pyrrolopyridine inhibitors. Functionally, stress-activated serine/threonine-protein kinase involved in cytokine production, endocytosis, reorganization of the cytoskeleton, cell migration, cell cycle control, chromatin remodeling, DNA damage response and transcriptional regulation. Following stress, it is phosphorylated and activated by MAP kinase p38-alpha/MAPK14, leading to phosphorylation of substrates. Phosphorylates serine in the peptide sequence, Hyd-X-R-X(2)-S, where Hyd is a large hydrophobic residue. Phosphorylates ALOX5, CDC25B, CDC25C, CEP131, ELAVL1, HNRNPA0, HSP27/HSPB1, KRT18, KRT20, LIMK1, LSP1, PABPC1, PARN, PDE4A, RCSD1, RPS6KA3, TAB3 and TTP/ZFP36. Phosphorylates HSF1; leading to the interaction with HSP90 proteins and inhibiting HSF1 homotrimerization, DNA-binding and transactivation activities. Mediates phosphorylation of HSP27/HSPB1 in response to stress, leading to dissociation of HSP27/HSPB1 from large small heat-shock protein (sHsps) oligomers and impairment of their chaperone activities and ability to protect against oxidative stress effectively. Involved in inflammatory response by regulating tumor necrosis factor (TNF) and IL6 production post-transcriptionally: acts by phosphorylating AU-rich elements (AREs)-binding proteins ELAVL1, HNRNPA0, PABPC1 and TTP/ZFP36, leading to regulate the stability and translation of TNF and IL6 mRNAs. Phosphorylation of TTP/ZFP36, a major post-transcriptional regulator of TNF, promotes its binding to 14-3-3 proteins and reduces its ARE mRNA affinity leading to inhibition of dependent degradation of ARE-containing transcripts. Phosphorylates CEP131 in response to cellular stress following ultraviolet irradiation which promotes binding of CEP131 to 14-3-3 proteins and inhibits formation of novel centriolar satellites. Also involved in late G2/M checkpoint following DNA damage through a process of post-transcriptional mRNA stabilization: following DNA damage, relocalizes from nucleus to cytoplasm and phosphorylates HNRNPA0 and PARN, leading to stabilization of GADD45A mRNA. Involved in toll-like receptor signaling pathway (TLR) in dendritic cells: required for acute TLR-induced macropinocytosis by phosphorylating and activating RPS6KA3. This chain is MAP kinase-activated protein kinase 2 (MAPKAPK2), found in Oryctolagus cuniculus (Rabbit).